The chain runs to 543 residues: MFLKFKNIFFIVLTLSIVFNGLIVNSKNIHINNKNNNNNNNNKDLSSSESGSSSDINPYISQYNSERETLVNQENQIKLGSNTPFNSKEQQANTIFLNILQNEELSFSNNDPSGVNFFIEKQIIENESTIFKIIQNMPKGSALHVHQDSSATYDYLISVGSYLPNCYIYLTYDVNDANNGTFHFYDSQPTDSNWKLLSTIREGVSNVESFDQQLLDSLTLIGQDYGDYVSLWRKFDGIFGRVNGLVTYLPIATGYMEHLFQQMIQDGVQHIEVRKCFGDFYDLTGKIYDDYWFVQTMEELVLTTRQKYNMSEFALKIIGCNGRHNNQSVVYDAMVMSLDLRNKYPSTFVGYDLVGPEDEGYPLIYFIEQFAEIKKLGYQYQYPLDYYFHAGETILYNNTNLYDAILLNTKRIGHGIQLPKHPLLMDLVLKNDIGIEICPISNQILQYVSDMRAHPGLDLLNRGLPVTISPDDPAIFNYGGLSYDFFELTYSWGLNLQQLKQLAINSINHSNTFNQSEYNLLYNAWEVKWFNFIDYIINTYSNI.

Positions 1 to 26 (MFLKFKNIFFIVLTLSIVFNGLIVNS) are cleaved as a signal peptide. Residues 31–54 (INNKNNNNNNNNKDLSSSESGSSS) are compositionally biased toward low complexity. The segment at 31–58 (INNKNNNNNNNNKDLSSSESGSSSDINP) is disordered. The N-linked (GlcNAc...) asparagine glycan is linked to Asn126. The Zn(2+) site is built by His144 and His146. N-linked (GlcNAc...) asparagine glycosylation occurs at Asn179. Position 232-239 (232-239 (WRKFDGIF)) interacts with substrate. 2 N-linked (GlcNAc...) asparagine glycosylation sites follow: Asn309 and Asn326. Substrate is bound at residue Gly355. Residue His389 participates in Zn(2+) binding. The active-site Proton donor is Glu392. Asn397 is a glycosylation site (N-linked (GlcNAc...) asparagine). His414 (proton acceptor) is an active-site residue. Asp471 is a binding site for Zn(2+). Position 472 (Asp472) interacts with substrate. Asn508 and Asn514 each carry an N-linked (GlcNAc...) asparagine glycan.

It belongs to the metallo-dependent hydrolases superfamily. Adenosine and AMP deaminases family. ADGF subfamily. The cofactor is Zn(2+).

It is found in the secreted. The catalysed reaction is adenosine + H2O + H(+) = inosine + NH4(+). In terms of biological role, adenosine deaminase that may contribute to the degradation of extracellular adenosine, a signaling molecule that controls a variety of cellular responses. May play a role in the regulation of cell proliferation. The polypeptide is Adenosine deaminase 2 (Dictyostelium discoideum (Social amoeba)).